Reading from the N-terminus, the 534-residue chain is CTP synthase (534 aa).

The segment at 1-265 is amidoligase domain; it reads MKYIVVTGGV…TTQLMKHLRL (265 aa). Position 12 (serine 12) interacts with CTP. Position 12 (serine 12) interacts with UTP. 13 to 18 contributes to the ATP binding site; that stretch reads GLGKGI. Residue tyrosine 53 participates in L-glutamine binding. Residue aspartate 70 participates in ATP binding. Positions 70 and 140 each coordinate Mg(2+). CTP-binding positions include 147 to 149, 186 to 191, and lysine 222; these read DIE and KTKPTQ. UTP is bound by residues 186 to 191 and lysine 222; that span reads KTKPTQ. Residues 289 to 530 enclose the Glutamine amidotransferase type-1 domain; the sequence is KLAIVGKYTN…VRAMCKYRKE (242 aa). L-glutamine is bound at residue glycine 352. Catalysis depends on cysteine 379, which acts as the Nucleophile; for glutamine hydrolysis. L-glutamine is bound by residues 380 to 383, glutamate 403, and arginine 460; that span reads LGMQ. Catalysis depends on residues histidine 503 and glutamate 505.

It belongs to the CTP synthase family. In terms of assembly, homotetramer.

The enzyme catalyses UTP + L-glutamine + ATP + H2O = CTP + L-glutamate + ADP + phosphate + 2 H(+). It catalyses the reaction L-glutamine + H2O = L-glutamate + NH4(+). It carries out the reaction UTP + NH4(+) + ATP = CTP + ADP + phosphate + 2 H(+). It functions in the pathway pyrimidine metabolism; CTP biosynthesis via de novo pathway; CTP from UDP: step 2/2. With respect to regulation, allosterically activated by GTP, when glutamine is the substrate; GTP has no effect on the reaction when ammonia is the substrate. The allosteric effector GTP functions by stabilizing the protein conformation that binds the tetrahedral intermediate(s) formed during glutamine hydrolysis. Inhibited by the product CTP, via allosteric rather than competitive inhibition. In terms of biological role, catalyzes the ATP-dependent amination of UTP to CTP with either L-glutamine or ammonia as the source of nitrogen. Regulates intracellular CTP levels through interactions with the four ribonucleotide triphosphates. In Methanosarcina mazei (strain ATCC BAA-159 / DSM 3647 / Goe1 / Go1 / JCM 11833 / OCM 88) (Methanosarcina frisia), this protein is CTP synthase.